A 365-amino-acid polypeptide reads, in one-letter code: tRNA-specific 2-thiouridylase MnmA (365 aa).

ATP is bound by residues 6–13 (AMSGGVDS) and Met32. The active-site Nucleophile is the Cys101. A disulfide bridge connects residues Cys101 and Cys199. Gly125 contributes to the ATP binding site. Residues 148 to 150 (KDQ) form an interaction with tRNA region. Cys199 serves as the catalytic Cysteine persulfide intermediate.

Belongs to the MnmA/TRMU family.

The protein resides in the cytoplasm. The enzyme catalyses S-sulfanyl-L-cysteinyl-[protein] + uridine(34) in tRNA + AH2 + ATP = 2-thiouridine(34) in tRNA + L-cysteinyl-[protein] + A + AMP + diphosphate + H(+). Functionally, catalyzes the 2-thiolation of uridine at the wobble position (U34) of tRNA, leading to the formation of s(2)U34. This is tRNA-specific 2-thiouridylase MnmA from Kineococcus radiotolerans (strain ATCC BAA-149 / DSM 14245 / SRS30216).